We begin with the raw amino-acid sequence, 62 residues long: Potassium channel toxin alpha-KTx 22.1 (62 aa).

The N-terminal stretch at 1–18 (MQKLFIVFVLFCILRLDA) is a signal peptide. Intrachain disulfides connect C28/C46, C33/C59, and C37/C61.

Belongs to the short scorpion toxin superfamily. Potassium channel inhibitor family. Alpha-KTx 22 subfamily. In terms of tissue distribution, expressed by the venom gland.

Its subcellular location is the secreted. In terms of biological role, may block potassium channels. The protein is Potassium channel toxin alpha-KTx 22.1 of Olivierus martensii (Manchurian scorpion).